We begin with the raw amino-acid sequence, 675 residues long: Methionine--tRNA ligase (675 aa).

The short motif at 12-22 is the 'HIGH' region element; that stretch reads PYANGPIHLGH. Zn(2+) is bound by residues Cys143, Cys146, Cys156, and Cys159. Residues 328-332 carry the 'KMSKS' region motif; sequence KMSKS. Lys331 is a binding site for ATP. Residues 574–675 enclose the tRNA-binding domain; the sequence is DFAKVDLRIA…QGAQPGMRVK (102 aa).

Belongs to the class-I aminoacyl-tRNA synthetase family. MetG type 1 subfamily. In terms of assembly, homodimer. It depends on Zn(2+) as a cofactor.

It is found in the cytoplasm. The catalysed reaction is tRNA(Met) + L-methionine + ATP = L-methionyl-tRNA(Met) + AMP + diphosphate. Is required not only for elongation of protein synthesis but also for the initiation of all mRNA translation through initiator tRNA(fMet) aminoacylation. This chain is Methionine--tRNA ligase, found in Alkalilimnicola ehrlichii (strain ATCC BAA-1101 / DSM 17681 / MLHE-1).